The primary structure comprises 368 residues: Cobalt-precorrin-5B C(1)-methyltransferase (368 aa).

It belongs to the CbiD family.

The catalysed reaction is Co-precorrin-5B + S-adenosyl-L-methionine = Co-precorrin-6A + S-adenosyl-L-homocysteine. Its pathway is cofactor biosynthesis; adenosylcobalamin biosynthesis; cob(II)yrinate a,c-diamide from sirohydrochlorin (anaerobic route): step 6/10. Catalyzes the methylation of C-1 in cobalt-precorrin-5B to form cobalt-precorrin-6A. The sequence is that of Cobalt-precorrin-5B C(1)-methyltransferase from Brucella anthropi (strain ATCC 49188 / DSM 6882 / CCUG 24695 / JCM 21032 / LMG 3331 / NBRC 15819 / NCTC 12168 / Alc 37) (Ochrobactrum anthropi).